The primary structure comprises 325 residues: UPF0285 protein MmarC5_0962 (325 aa).

The protein belongs to the UPF0285 family.

This chain is UPF0285 protein MmarC5_0962, found in Methanococcus maripaludis (strain C5 / ATCC BAA-1333).